A 1137-amino-acid chain; its full sequence is Ribonucleoside-diphosphate reductase large subunit (1137 aa).

The segment at 1–32 (MASRPAASSPVEARAPVGGQEAGGPSAATQGE) is disordered. An RIP homotypic interaction motif (RHIM) motif is present at residues 64 to 84 (SYRISDNNFVQCGSNCTMIID). 2 disordered regions span residues 124-159 (GGTP…FTLG) and 173-315 (AVFG…YPVP). The span at 131 to 141 (AGTSTGTQTAD) shows a compositional bias: polar residues. Acidic residues predominate over residues 196–206 (SDSDDSEDTDS). Residues 281-290 (AGAGLAADPA) show a composition bias toward low complexity. The segment covering 291–304 (VARDDAEGLSDPRP) has biased composition (basic and acidic residues). Substrate is bound by residues threonine 566, 581-582 (SC), glycine 612, 791-795 (NLCTE), and 968-972 (PTAAS). A disulfide bond links cysteine 582 and cysteine 808. Catalysis depends on asparagine 791, which acts as the Proton acceptor. Cysteine 793 serves as the catalytic Cysteine radical intermediate. Residue glutamate 795 is the Proton acceptor of the active site.

Belongs to the ribonucleoside diphosphate reductase large chain family. In terms of assembly, heterotetramer composed of a homodimer of the large subunit (R1) and a homodimer of the small subunit (R2). Larger multisubunit protein complex are also active, composed of (R1)n(R2)n. Self-assembles (via RIP homotypic interaction motif/RHIM) into homomeric fibrillar amyloid structures. Interacts (via RHIM) with human RIPK1 (via RHIM). Interacts (via RHIM) with human RIPK3 (via RHIM); the interaction leads to heteromeric amyloid assemblies. Interacts (via RHIM) with human ZBP1 (via RHIM); the interaction leads to heteromeric amyloid assemblies. Interacts (via C-terminus) with host CASP8.

It carries out the reaction a 2'-deoxyribonucleoside 5'-diphosphate + [thioredoxin]-disulfide + H2O = a ribonucleoside 5'-diphosphate + [thioredoxin]-dithiol. In terms of biological role, ribonucleoside-diphosphate reductase holoenzyme that provides the precursors necessary for viral DNA synthesis. Allows virus growth in non-dividing cells, as well as reactivation from latency in infected hosts. Catalyzes the biosynthesis of deoxyribonucleotides from the corresponding ribonucleotides. Prevents host necroptosis by targeting host RIPK1 and RIPK3, thereby hampering the formation of necroptotic RIPK1-RIPK3 complexes. Forms hetero-amyloid structures with host proteins RIPK3 or ZBP1 which may prevent RIPK3- and ZBP1-mediated necroptosis. In addition, inhibits extrinsic apoptosis by targeting host CASP8. The chain is Ribonucleoside-diphosphate reductase large subunit from Human herpesvirus 1 (strain 17) (HHV-1).